The following is a 78-amino-acid chain: Small ribosomal subunit protein bS20 (78 aa).

Residues 55–78 (KSKGLIHKNKASRDKARLASKLAK) are disordered.

The protein belongs to the bacterial ribosomal protein bS20 family.

Binds directly to 16S ribosomal RNA. The chain is Small ribosomal subunit protein bS20 from Streptococcus mutans serotype c (strain ATCC 700610 / UA159).